We begin with the raw amino-acid sequence, 287 residues long: Uroporphyrinogen-III C-methyltransferase (287 aa).

The segment covering 1-10 (MAGKTVTNGA) has biased composition (polar residues). Residues 1–24 (MAGKTVTNGAAQGKAARSGADGAV) form a disordered region. S-adenosyl-L-methionine is bound by residues proline 40, 116 to 118 (GGD), threonine 146, and methionine 199.

The protein belongs to the precorrin methyltransferase family.

It carries out the reaction uroporphyrinogen III + 2 S-adenosyl-L-methionine = precorrin-2 + 2 S-adenosyl-L-homocysteine + H(+). Its pathway is porphyrin-containing compound metabolism; siroheme biosynthesis; precorrin-2 from uroporphyrinogen III: step 1/1. Catalyzes the methylation of both C-2 and C-7 of uroporphyrinogen III leading to precorrin-1 and precorrin-2; their oxidative esterification gives respectively factor I octamethyl ester and sirohydrochlorin. Inactivation of uroporphyrinogen-III methyltransferase results in the loss of nitrite and nitric oxide reductase activities, but not of nitrous oxide reductase activity. Likely involved in heme D1 biosynthesis. In Paracoccus denitrificans (strain Pd 1222), this protein is Uroporphyrinogen-III C-methyltransferase (nirE).